Reading from the N-terminus, the 102-residue chain is Small ribosomal subunit protein uS10 (102 aa).

It belongs to the universal ribosomal protein uS10 family. Part of the 30S ribosomal subunit.

Its function is as follows. Involved in the binding of tRNA to the ribosomes. In Leptospira borgpetersenii serovar Hardjo-bovis (strain JB197), this protein is Small ribosomal subunit protein uS10.